Consider the following 86-residue polypeptide: UPF0291 protein LBA1279 (86 aa).

2 stretches are compositionally biased toward basic and acidic residues: residues 1–27 (MNKD…KENE) and 65–75 (NGKEVTSEKAK). Disordered stretches follow at residues 1–36 (MNKD…EEEE) and 65–86 (NGKE…LRKD). A compositionally biased stretch (basic residues) spans 76 to 86 (QAQRKKGLRKD).

It belongs to the UPF0291 family.

It is found in the cytoplasm. This chain is UPF0291 protein LBA1279, found in Lactobacillus acidophilus (strain ATCC 700396 / NCK56 / N2 / NCFM).